Here is a 342-residue protein sequence, read N- to C-terminus: Nucleoid-associated protein Sputcn32_2288 (342 aa).

The protein belongs to the YejK family.

It is found in the cytoplasm. Its subcellular location is the nucleoid. The sequence is that of Nucleoid-associated protein Sputcn32_2288 from Shewanella putrefaciens (strain CN-32 / ATCC BAA-453).